The primary structure comprises 479 residues: Deoxyribodipyrimidine photo-lyase (479 aa).

The 132-residue stretch at 6 to 137 (SLKAVWFRRD…PFYTFEDAYL (132 aa)) folds into the Photolyase/cryptochrome alpha/beta domain. Y229 contacts FAD. Position 233 (R233) interacts with DNA. FAD-binding positions include 241 to 245 (TSRLS) and 278 to 285 (ELAWRDFY). Interaction with DNA regions lie at residues 278 to 285 (ELAWRDFY) and 344 to 345 (NR). Residue 375–377 (DYD) coordinates FAD. Q407 is a DNA binding site.

This sequence belongs to the DNA photolyase class-1 family. In terms of assembly, monomer. It depends on FAD as a cofactor. The cofactor is (6R)-5,10-methylene-5,6,7,8-tetrahydrofolate.

The catalysed reaction is cyclobutadipyrimidine (in DNA) = 2 pyrimidine residues (in DNA).. Functionally, involved in repair of UV radiation-induced DNA damage. Catalyzes the light-dependent monomerization (300-600 nm) of cyclobutyl pyrimidine dimers (in cis-syn configuration), which are formed between adjacent bases on the same DNA strand upon exposure to ultraviolet radiation. This is Deoxyribodipyrimidine photo-lyase (phr) from Alkalihalophilus pseudofirmus (strain ATCC BAA-2126 / JCM 17055 / OF4) (Bacillus pseudofirmus).